The sequence spans 286 residues: Protein NipSnap homolog 2 (286 aa).

The N-terminal 40 residues, 1–40, are a transit peptide targeting the mitochondrion; the sequence is MATRVLHSSCSGLYRAAGPARGKGHATAVIRSLSASHNRP.

It belongs to the NipSnap family.

The protein localises to the mitochondrion matrix. Its function is as follows. Protein involved in mitophagy. Accumulates on the mitochondria surface in response to mitochondrial depolarization and acts as a 'eat me' signal by recruiting proteins involved in selective autophagy. The polypeptide is Protein NipSnap homolog 2 (nipsnap2) (Danio rerio (Zebrafish)).